Consider the following 304-residue polypeptide: MLMTEDRLTHLKQLEAESIHIIREVAAEFENPVMLYSIGKDSAVMLHLALKAFYPAKLPFPLLHVDTGWKFKDMIAFRDNMAKTHGFDLIVHQNKEGREAGINPFDHGSSKYTDIMKTQGLKQALDKYQFDAAFGGARRDEEKSRAKERVYSFRDTKHRWDPKNQRPELWSLYNGKVNKGESIRVFPLSNWTELDIWQYIYLENIQIVPLYFSAVRPVVERSGTLIMVDDERMRLKEGEVPQMKSVRFRTLGCYPLTGAVESEADTLPEIIQEMLLATSSERQGRMIDHDEAGSMEKKKQEGYF.

This sequence belongs to the PAPS reductase family. CysD subfamily. Heterodimer composed of CysD, the smaller subunit, and CysN.

The catalysed reaction is sulfate + ATP + H(+) = adenosine 5'-phosphosulfate + diphosphate. Its pathway is sulfur metabolism; hydrogen sulfide biosynthesis; sulfite from sulfate: step 1/3. With CysN forms the ATP sulfurylase (ATPS) that catalyzes the adenylation of sulfate producing adenosine 5'-phosphosulfate (APS) and diphosphate, the first enzymatic step in sulfur assimilation pathway. APS synthesis involves the formation of a high-energy phosphoric-sulfuric acid anhydride bond driven by GTP hydrolysis by CysN coupled to ATP hydrolysis by CysD. The sequence is that of Sulfate adenylyltransferase subunit 2 from Acinetobacter baylyi (strain ATCC 33305 / BD413 / ADP1).